The following is a 191-amino-acid chain: Protein RER1 homolog (191 aa).

The next 3 membrane-spanning stretches (helical) occupy residues 35-55, 57-77, and 135-155; these read AFRW…IILL, GFYI…LLFL, and FFDV…LTFL.

This sequence belongs to the RER1 family.

Its subcellular location is the membrane. Its function is as follows. May be involved in protein transport along the secretory pathway. The sequence is that of Protein RER1 homolog (rer-1) from Caenorhabditis elegans.